The sequence spans 122 residues: Flagellar protein FliT (122 aa).

The tract at residues 1–50 (MTSTVEFINRWQRIALLSQSLLELAQRGEWDLLLQQEVSYLQSIETVMEK) is required for homodimerization. The tract at residues 60 to 98 (IQDMVAGYIKQTLDNEQLLKGLLQQRLDELSSLIGQSTR) is fliD binding.

The protein belongs to the FliT family. Homodimer. Interacts with FliD and FlhC.

It localises to the cytoplasm. It is found in the cytosol. Dual-function protein that regulates the transcription of class 2 flagellar operons and that also acts as an export chaperone for the filament-capping protein FliD. As a transcriptional regulator, acts as an anti-FlhDC factor; it directly binds FlhC, thus inhibiting the binding of the FlhC/FlhD complex to class 2 promoters, resulting in decreased expression of class 2 flagellar operons. As a chaperone, effects FliD transition to the membrane by preventing its premature polymerization, and by directing it to the export apparatus. The protein is Flagellar protein FliT of Salmonella gallinarum (strain 287/91 / NCTC 13346).